A 231-amino-acid polypeptide reads, in one-letter code: Ribose-5-phosphate isomerase A (231 aa).

Substrate is bound by residues threonine 32–threonine 35, aspartate 85–aspartate 88, and lysine 98–glycine 101. Residue glutamate 107 is the Proton acceptor of the active site. Lysine 125 lines the substrate pocket.

This sequence belongs to the ribose 5-phosphate isomerase family. Homodimer.

It carries out the reaction aldehydo-D-ribose 5-phosphate = D-ribulose 5-phosphate. Its pathway is carbohydrate degradation; pentose phosphate pathway; D-ribose 5-phosphate from D-ribulose 5-phosphate (non-oxidative stage): step 1/1. In terms of biological role, catalyzes the reversible conversion of ribose-5-phosphate to ribulose 5-phosphate. The chain is Ribose-5-phosphate isomerase A from Burkholderia cenocepacia (strain ATCC BAA-245 / DSM 16553 / LMG 16656 / NCTC 13227 / J2315 / CF5610) (Burkholderia cepacia (strain J2315)).